The sequence spans 618 residues: Leucine aminopeptidase 2 (618 aa).

A peptide-binding positions include 139–141 (QCQ) and 271–276 (PYGGME). A Zn(2+)-binding site is contributed by H300. E301 acts as the Proton acceptor in catalysis. Positions 304 and 323 each coordinate Zn(2+). Residue Y389 is the Proton donor of the active site.

Belongs to the peptidase M1 family. Requires Zn(2+) as cofactor.

The protein resides in the cytoplasm. Its subcellular location is the nucleus. The enzyme catalyses an epoxide + H2O = an ethanediol. Aminopeptidase that preferentially cleaves di- and tripeptides. Also has low epoxide hydrolase activity (in vitro). Can hydrolyze the epoxide leukotriene LTA(4) but it forms preferentially 5,6-dihydroxy-7,9,11,14-eicosatetraenoic acid rather than the cytokine leukotriene B(4) as the product compared to the homologous mammalian enzyme (in vitro). The chain is Leucine aminopeptidase 2 from Aspergillus clavatus (strain ATCC 1007 / CBS 513.65 / DSM 816 / NCTC 3887 / NRRL 1 / QM 1276 / 107).